The primary structure comprises 123 residues: Protein Wnt-7b (123 aa).

Ser-1 carries O-palmitoleoyl serine; by PORCN lipidation. A disordered linker region spans residues 33–61; the sequence is VEVVRASRLRQPTFLKIKQIKSYQKPMET. Residues Cys-89 and Cys-104 are joined by a disulfide bond. N-linked (GlcNAc...) asparagine glycosylation occurs at Asn-90.

This sequence belongs to the Wnt family. Palmitoleoylation is required for efficient binding to frizzled receptors. Depalmitoleoylation leads to Wnt signaling pathway inhibition.

The protein resides in the secreted. Its subcellular location is the extracellular space. The protein localises to the extracellular matrix. Its function is as follows. Ligand for members of the frizzled family of seven transmembrane receptors that functions in the canonical Wnt/beta-catenin signaling pathway. Required for normal fusion of the chorion and the allantois during placenta development. Required for central nervous system (CNS) angiogenesis and blood-brain barrier regulation. This Anser caerulescens (Snow goose) protein is Protein Wnt-7b (WNT7B).